The following is a 342-amino-acid chain: Polygalacturonase inhibitor 1 (342 aa).

Positions Met1–Ser29 are cleaved as a signal peptide. 2 disulfides stabilise this stretch: Cys32/Cys62 and Cys63/Cys72. A glycan (N-linked (GlcNAc...) asparagine) is linked at Asn64. 10 LRR repeats span residues Asn82 to Leu107, Asn108 to Leu132, His133 to Leu156, Val157 to Leu180, Gly181 to Phe205, Thr206 to Leu228, Ala229 to Thr252, Lys253 to Leu275, Asn276 to Leu299, and Gln300 to Leu319. Asn141 is a glycosylation site (N-linked (GlcNAc...) asparagine). N-linked (GlcNAc...) asparagine glycosylation occurs at Asn303. 2 disulfides stabilise this stretch: Cys310–Cys332 and Cys334–Cys341.

Belongs to the polygalacturonase-inhibiting protein family.

It localises to the secreted. Its subcellular location is the cell wall. It is found in the membrane. Its function is as follows. Inhibitor of fungal polygalacturonase. It is an important factor for plant resistance to phytopathogenic fungi. Substrate preference is polygalacturonase (PG) from A.niger &gt;&gt; PG of F.oxysporum, A.solani or B.cinerea. Not active on PG from F.moniliforme. The sequence is that of Polygalacturonase inhibitor 1 (PGIP1) from Phaseolus vulgaris (Kidney bean).